The following is a 554-amino-acid chain: (+)-delta-cadinene synthase isozyme XC14 (554 aa).

Residues 1–16 are compositionally biased toward low complexity; that stretch reads MASQVSQMPSSSPLSS. Positions 1–23 are disordered; that stretch reads MASQVSQMPSSSPLSSNKDEMRP. Mg(2+) contacts are provided by Asp307, Asp311, and Asp451. Residues 307-311 carry the DDXXD motif motif; it reads DDTYD.

It belongs to the terpene synthase family. It depends on Mg(2+) as a cofactor.

It catalyses the reaction (2E,6E)-farnesyl diphosphate = (1S,8aR)-delta-cadinene + diphosphate. It functions in the pathway secondary metabolite biosynthesis; terpenoid biosynthesis. Its function is as follows. Responsible for the cyclization of trans,trans-farnesyl diphosphate (FPP) to (+)-delta cadinene. The polypeptide is (+)-delta-cadinene synthase isozyme XC14 (Gossypium arboreum (Tree cotton)).